The chain runs to 157 residues: Arginine repressor (157 aa).

Belongs to the ArgR family.

The protein localises to the cytoplasm. The protein operates within amino-acid biosynthesis; L-arginine biosynthesis [regulation]. In terms of biological role, regulates arginine biosynthesis genes. The protein is Arginine repressor of Lactobacillus delbrueckii subsp. bulgaricus (strain ATCC 11842 / DSM 20081 / BCRC 10696 / JCM 1002 / NBRC 13953 / NCIMB 11778 / NCTC 12712 / WDCM 00102 / Lb 14).